A 398-amino-acid polypeptide reads, in one-letter code: UPF0229 protein Ccel_0490 (398 aa).

Disordered regions lie at residues 1-22 (MAIFRDCSNIGKDRSAEDRRRH) and 68-104 (KSKPGVGAGDGNEKRGDKFPGDSQEGKGKGNAGNSEG). Basic and acidic residues-rich tracts occupy residues 11–22 (GKDRSAEDRRRH) and 78–95 (GNEKRGDKFPGDSQEGKG).

It belongs to the UPF0229 family.

The chain is UPF0229 protein Ccel_0490 from Ruminiclostridium cellulolyticum (strain ATCC 35319 / DSM 5812 / JCM 6584 / H10) (Clostridium cellulolyticum).